A 343-amino-acid chain; its full sequence is GTPase Obg (343 aa).

The 159-residue stretch at 1-159 folds into the Obg domain; that stretch reads MKFIDEVKIQ…FELRLELRVL (159 aa). One can recognise an OBG-type G domain in the interval 160 to 334; it reads ADVGLLGLPN…LIYAIMGHLQ (175 aa). Residues 166–173, 191–195, 213–216, 284–287, and 315–317 each bind GTP; these read GLPNAGKS, FTTLY, DIPG, NKVD, and SAL. Mg(2+)-binding residues include Ser173 and Thr193.

It belongs to the TRAFAC class OBG-HflX-like GTPase superfamily. OBG GTPase family. As to quaternary structure, monomer. The cofactor is Mg(2+).

The protein resides in the cytoplasm. Functionally, an essential GTPase which binds GTP, GDP and possibly (p)ppGpp with moderate affinity, with high nucleotide exchange rates and a fairly low GTP hydrolysis rate. Plays a role in control of the cell cycle, stress response, ribosome biogenesis and in those bacteria that undergo differentiation, in morphogenesis control. The sequence is that of GTPase Obg from Nitrosomonas europaea (strain ATCC 19718 / CIP 103999 / KCTC 2705 / NBRC 14298).